The following is a 3133-amino-acid chain: Hemocytin (3133 aa).

A TIL 1 domain is found at 40-96 (CTGGQQYTVCADSCLRKCSDTALAASGQCKPVCVEGCACSPSQLLDDNGVCVPVAKC). Asn-151 carries N-linked (GlcNAc...) asparagine glycosylation. The region spanning 153–209 (TAQNMEFTTCETSEPLTCKNMHLPPSTQTAECRPGCQCKKGQVLDTASKRCVPATQC) is the TIL 2 domain. The N-linked (GlcNAc...) asparagine glycan is linked to Asn-237. In terms of domain architecture, VWFD 1 spans 247-418 (GVCGAWGDSH…DSWKLKPTCP (172 aa)). Disulfide bonds link Cys-249/Cys-380, Cys-271/Cys-417, and Cys-295/Cys-302. The 68-residue stretch at 509–576 (CDEVCSNYDS…TTECVPRAKC (68 aa)) folds into the TIL 3 domain. The N-linked (GlcNAc...) asparagine glycan is linked to Asn-564. A disordered region spans residues 661 to 680 (PDGQSVESEPLPKPNELQIG). The region spanning 770 to 837 (CPPGEVYQAC…ERTCVPVKDC (68 aa)) is the TIL 4 domain. The tract at residues 899–924 (STTTTTTTSTTTTTTTPEPTETTTET) is disordered. 2 disulfide bridges follow: Cys-940-Cys-1095 and Cys-1116-Cys-1254. F5/8 type C domains are found at residues 940–1095 (CSPD…IIGC) and 1116–1254 (CTEP…PIGC). N-linked (GlcNAc...) asparagine glycosylation is found at Asn-1170, Asn-1387, Asn-1622, Asn-1727, and Asn-1847. The region spanning 1619–1794 (VFCNMTGRTF…KPGVPADACA (176 aa)) is the VWFD 2 domain. 2 disulfide bridges follow: Cys-1621/Cys-1754 and Cys-1641/Cys-1793. Positions 1890–1948 (CPPPLVHYDCYRKRCEETCAPYPNAARACPAQEGQCSPGCYCPDGKLRKGDQCVLPADC) constitute a TIL 5 domain. Residues 1951–2136 (CTCTGVGTPA…WQASPEKLTE (186 aa)) form the VWFD 3 domain. 2 disulfide bridges follow: Cys-1953-Cys-2099 and Cys-2001-Cys-2009. Residues Asn-1975 and Asn-1985 are each glycosylated (N-linked (GlcNAc...) asparagine). 5 N-linked (GlcNAc...) asparagine glycosylation sites follow: Asn-2093, Asn-2113, Asn-2161, Asn-2276, and Asn-2451. The region spanning 2229-2285 (CEEPFVYRACVDCERTCDNYEQLQTSPEKCTNKPVEGCFCPEGKVRVNNTCIEPGKC) is the TIL 6 domain. In terms of domain architecture, VWFC 1 spans 2553–2622 (VACRHQDNVY…DSGQCCGKCE (70 aa)). 9 N-linked (GlcNAc...) asparagine glycosylation sites follow: Asn-2647, Asn-2654, Asn-2663, Asn-2794, Asn-2810, Asn-2865, Asn-2929, Asn-2964, and Asn-3028. Residues 2842–2907 (VACRDGDKIY…AADHCCGRCV (66 aa)) form the VWFC 2 domain. 4 cysteine pairs are disulfide-bonded: Cys-2971-Cys-3040, Cys-2991-Cys-3054, Cys-3004-Cys-3070, and Cys-3020-Cys-3072. The CTCK domain occupies 2971 to 3076 (CNEKPQALSK…PARCHCAACG (106 aa)).

In terms of processing, may be converted into the 260 kDa mature hemocytin by proteolysis.

In terms of biological role, adhesive protein and relates to hemostasis or encapsulation of foreign substances for self-defense. This chain is Hemocytin, found in Bombyx mori (Silk moth).